Consider the following 338-residue polypeptide: Solute carrier family 35 member G3 (338 aa).

The tract at residues 1–24 (MAGSHPYFNQPDSTHPSPPSAPPS) is disordered. 9 consecutive transmembrane segments (helical) span residues 37–57 (TSGL…VGPL), 67–87 (LPSL…ALLL), 105–125 (FFCA…VQVV), 160–180 (CGLL…LWTL), 185–205 (TGVY…ALSL), 221–241 (TVAF…LFVL), 250–270 (LLSW…FTCV), 281–301 (LVCA…YYML), and 305–325 (VAPS…IITA). Residues 49–174 (LPAGFVGPLS…CILGLIIIVG (126 aa)) form the EamA 1 domain. In terms of domain architecture, EamA 2 spans 272-325 (YAVTKAHPALVCAVLHSEVVVALILQYYMLHETVAPSDIVAAGVVLGSIAIITA).

Belongs to the SLC35G solute transporter family. As to expression, expressed in testis.

It is found in the membrane. The sequence is that of Solute carrier family 35 member G3 (SLC35G3) from Homo sapiens (Human).